Consider the following 265-residue polypeptide: Glutamate racemase (265 aa).

Substrate contacts are provided by residues 10–11 (DS) and 42–43 (YG). The active-site Proton donor/acceptor is Cys-73. 74-75 (NT) contacts substrate. Cys-183 (proton donor/acceptor) is an active-site residue. 184–185 (TH) provides a ligand contact to substrate.

This sequence belongs to the aspartate/glutamate racemases family.

The catalysed reaction is L-glutamate = D-glutamate. It functions in the pathway cell wall biogenesis; peptidoglycan biosynthesis. Its function is as follows. Provides the (R)-glutamate required for cell wall biosynthesis. The protein is Glutamate racemase of Corynebacterium diphtheriae (strain ATCC 700971 / NCTC 13129 / Biotype gravis).